Reading from the N-terminus, the 313-residue chain is Ubiquitin-conjugating enzyme E2 Z (313 aa).

The UBC core domain maps to 58 to 212 (QCVLRIKRDI…IRHETIRVAV (155 aa)). The Glycyl thioester intermediate role is filled by cysteine 147. The tract at residues 283–313 (VREKHRKETVDIDSDSSSSETETDTQGSSNP) is disordered. Residues 297 to 313 (DSSSSETETDTQGSSNP) are compositionally biased toward low complexity.

Belongs to the ubiquitin-conjugating enzyme family.

The protein resides in the cytoplasm. Its subcellular location is the nucleus. The catalysed reaction is S-ubiquitinyl-[E1 ubiquitin-activating enzyme]-L-cysteine + [E2 ubiquitin-conjugating enzyme]-L-cysteine = [E1 ubiquitin-activating enzyme]-L-cysteine + S-ubiquitinyl-[E2 ubiquitin-conjugating enzyme]-L-cysteine.. It functions in the pathway protein modification; protein ubiquitination. Its function is as follows. Catalyzes the covalent attachment of ubiquitin to other proteins. May be involved in apoptosis regulation. This is Ubiquitin-conjugating enzyme E2 Z (ube2z) from Xenopus tropicalis (Western clawed frog).